We begin with the raw amino-acid sequence, 109 residues long: Nucleoid-associated protein SG0690 (109 aa).

Residues 1–23 form a disordered region; the sequence is MFGKGGMGNLMKQAQQMQEKMQR.

This sequence belongs to the YbaB/EbfC family. In terms of assembly, homodimer.

The protein localises to the cytoplasm. The protein resides in the nucleoid. In terms of biological role, binds to DNA and alters its conformation. May be involved in regulation of gene expression, nucleoid organization and DNA protection. The polypeptide is Nucleoid-associated protein SG0690 (Sodalis glossinidius (strain morsitans)).